Consider the following 246-residue polypeptide: Large ribosomal subunit protein uL30-like 1 (246 aa).

The residue at position 54 (S54) is a Phosphoserine.

Belongs to the universal ribosomal protein uL30 family.

This is Large ribosomal subunit protein uL30-like 1 (RPL7L1) from Pongo abelii (Sumatran orangutan).